The following is a 182-amino-acid chain: ATP synthase subunit delta (182 aa).

Belongs to the ATPase delta chain family. F-type ATPases have 2 components, F(1) - the catalytic core - and F(0) - the membrane proton channel. F(1) has five subunits: alpha(3), beta(3), gamma(1), delta(1), epsilon(1). F(0) has three main subunits: a(1), b(2) and c(10-14). The alpha and beta chains form an alternating ring which encloses part of the gamma chain. F(1) is attached to F(0) by a central stalk formed by the gamma and epsilon chains, while a peripheral stalk is formed by the delta and b chains.

It localises to the cell membrane. Its function is as follows. F(1)F(0) ATP synthase produces ATP from ADP in the presence of a proton or sodium gradient. F-type ATPases consist of two structural domains, F(1) containing the extramembraneous catalytic core and F(0) containing the membrane proton channel, linked together by a central stalk and a peripheral stalk. During catalysis, ATP synthesis in the catalytic domain of F(1) is coupled via a rotary mechanism of the central stalk subunits to proton translocation. Functionally, this protein is part of the stalk that links CF(0) to CF(1). It either transmits conformational changes from CF(0) to CF(1) or is implicated in proton conduction. This chain is ATP synthase subunit delta, found in Syntrophomonas wolfei subsp. wolfei (strain DSM 2245B / Goettingen).